A 130-amino-acid chain; its full sequence is Small ribosomal subunit protein uS9 (130 aa).

It belongs to the universal ribosomal protein uS9 family.

This is Small ribosomal subunit protein uS9 from Paraburkholderia phytofirmans (strain DSM 17436 / LMG 22146 / PsJN) (Burkholderia phytofirmans).